The following is a 364-amino-acid chain: MKYQGSPGFSHGQADKIGVLVTNLGTPEAPTKKALKPYLKEFLSDPRVVEVPRLLWFLILNGVILRFRPKRSAEAYKTVWTDRGSPLLFHTQDQASAIEAKLKQTWGDNIVVDFAMRYGNPALSEVVEKMMQKGVRKLLVLPLYPQYSASTTASTFDALAKDFTKRRWLPELRFITHYHDFSPFIEAAAQRIEKHWDAHGRADKLLFSYHGIPLRYLKNGDPYHCECYKTSRLLAERLGLGKDEYLTTFQSRFGREEWLQPYTDMTMKALPGKGVKSVQVFCPGFSSDCLETVEEIGEENREYFMESGGERYEYISALNAESGHIDALSQLIENNLQGWSVEDVTEQRQQRADQVKKQSLPYDD.

2 residues coordinate Fe cation: His-210 and Glu-291.

The protein belongs to the ferrochelatase family.

It is found in the cytoplasm. It catalyses the reaction heme b + 2 H(+) = protoporphyrin IX + Fe(2+). It participates in porphyrin-containing compound metabolism; protoheme biosynthesis; protoheme from protoporphyrin-IX: step 1/1. Its function is as follows. Catalyzes the ferrous insertion into protoporphyrin IX. This Idiomarina loihiensis (strain ATCC BAA-735 / DSM 15497 / L2-TR) protein is Ferrochelatase.